Reading from the N-terminus, the 173-residue chain is Crossover junction endodeoxyribonuclease RuvC (173 aa).

Residues Asp8, Glu67, and Asp139 contribute to the active site. Residues Asp8, Glu67, and Asp139 each contribute to the Mg(2+) site.

This sequence belongs to the RuvC family. In terms of assembly, homodimer which binds Holliday junction (HJ) DNA. The HJ becomes 2-fold symmetrical on binding to RuvC with unstacked arms; it has a different conformation from HJ DNA in complex with RuvA. In the full resolvosome a probable DNA-RuvA(4)-RuvB(12)-RuvC(2) complex forms which resolves the HJ. Mg(2+) serves as cofactor.

Its subcellular location is the cytoplasm. The enzyme catalyses Endonucleolytic cleavage at a junction such as a reciprocal single-stranded crossover between two homologous DNA duplexes (Holliday junction).. Functionally, the RuvA-RuvB-RuvC complex processes Holliday junction (HJ) DNA during genetic recombination and DNA repair. Endonuclease that resolves HJ intermediates. Cleaves cruciform DNA by making single-stranded nicks across the HJ at symmetrical positions within the homologous arms, yielding a 5'-phosphate and a 3'-hydroxyl group; requires a central core of homology in the junction. The consensus cleavage sequence is 5'-(A/T)TT(C/G)-3'. Cleavage occurs on the 3'-side of the TT dinucleotide at the point of strand exchange. HJ branch migration catalyzed by RuvA-RuvB allows RuvC to scan DNA until it finds its consensus sequence, where it cleaves and resolves the cruciform DNA. The chain is Crossover junction endodeoxyribonuclease RuvC from Aeromonas salmonicida (strain A449).